Here is a 482-residue protein sequence, read N- to C-terminus: DNA polymerase II small subunit (482 aa).

The protein belongs to the DNA polymerase delta/II small subunit family. Heterodimer of a large subunit and a small subunit.

The catalysed reaction is DNA(n) + a 2'-deoxyribonucleoside 5'-triphosphate = DNA(n+1) + diphosphate. It catalyses the reaction Exonucleolytic cleavage in the 3'- to 5'-direction to yield nucleoside 5'-phosphates.. Possesses two activities: a DNA synthesis (polymerase) and an exonucleolytic activity that degrades single-stranded DNA in the 3' to 5' direction. Has a template-primer preference which is characteristic of a replicative DNA polymerase. This Methanothermobacter thermautotrophicus (strain ATCC 29096 / DSM 1053 / JCM 10044 / NBRC 100330 / Delta H) (Methanobacterium thermoautotrophicum) protein is DNA polymerase II small subunit (polB).